The following is a 242-amino-acid chain: Small ribosomal subunit protein uS2 (242 aa).

This sequence belongs to the universal ribosomal protein uS2 family.

The sequence is that of Small ribosomal subunit protein uS2 from Neisseria gonorrhoeae (strain ATCC 700825 / FA 1090).